The chain runs to 295 residues: Acetylglutamate kinase (295 aa).

Substrate contacts are provided by residues 66 to 67 (GG), arginine 88, and asparagine 193.

This sequence belongs to the acetylglutamate kinase family. ArgB subfamily.

The protein resides in the cytoplasm. It catalyses the reaction N-acetyl-L-glutamate + ATP = N-acetyl-L-glutamyl 5-phosphate + ADP. The protein operates within amino-acid biosynthesis; L-arginine biosynthesis; N(2)-acetyl-L-ornithine from L-glutamate: step 2/4. Catalyzes the ATP-dependent phosphorylation of N-acetyl-L-glutamate. The polypeptide is Acetylglutamate kinase (Afipia carboxidovorans (strain ATCC 49405 / DSM 1227 / KCTC 32145 / OM5) (Oligotropha carboxidovorans)).